The following is a 311-amino-acid chain: Putative HTH-type transcriptional regulatory protein PTO0557 (311 aa).

The HTH cro/C1-type domain maps to 132 to 186; it reads MRRIRELKGYSVGYLSSKLGISRRSISLYESGSSATIDIYLKLEETLGEDLTKDI. Residues 143–162 constitute a DNA-binding region (H-T-H motif); that stretch reads VGYLSSKLGISRRSISLYES.

This is Putative HTH-type transcriptional regulatory protein PTO0557 from Picrophilus torridus (strain ATCC 700027 / DSM 9790 / JCM 10055 / NBRC 100828 / KAW 2/3).